A 185-amino-acid polypeptide reads, in one-letter code: Ribosome-recycling factor (185 aa).

It belongs to the RRF family.

Its subcellular location is the cytoplasm. Its function is as follows. Responsible for the release of ribosomes from messenger RNA at the termination of protein biosynthesis. May increase the efficiency of translation by recycling ribosomes from one round of translation to another. The polypeptide is Ribosome-recycling factor (Streptococcus pyogenes serotype M1).